The primary structure comprises 792 residues: Alpha-1,6-mannosylglycoprotein 6-beta-N-acetylglucosaminyltransferase B (792 aa).

Topologically, residues 1 to 24 (MITVNPDGKIMVRRCLVTLRPFRL) are cytoplasmic. Residues 25–45 (FVLGIGFFTLCFLMTSLGGQF) traverse the membrane as a helical; Signal-anchor for type II membrane protein segment. Topologically, residues 46–792 (SARRLGDSPF…GQVALCQGCL (747 aa)) are lumenal. Asn127 carries N-linked (GlcNAc...) asparagine glycosylation. 9 disulfide bridges follow: Cys157/Cys195, Cys168/Cys208, Cys184/Cys353, Cys387/Cys644, Cys700/Cys775, Cys704/Cys777, Cys711/Cys764, Cys732/Cys753, and Cys788/Cys791.

It belongs to the glycosyltransferase 18 family. Requires Mn(2+) as cofactor. As to expression, predominantly expressed in brain. Expressed in all areas of the adult and fetal brain. Also expressed at much lower levels in testis, spleen and thymus.

The protein resides in the golgi apparatus membrane. It catalyses the reaction N(4)-{beta-D-GlcNAc-(1-&gt;2)-[beta-D-GlcNAc-(1-&gt;4)]-alpha-D-Man-(1-&gt;3)-[beta-D-GlcNAc-(1-&gt;2)-alpha-D-Man-(1-&gt;6)]-beta-D-Man-(1-&gt;4)-beta-D-GlcNAc-(1-&gt;4)-beta-D-GlcNAc}-L-asparaginyl-[protein] + UDP-N-acetyl-alpha-D-glucosamine = N(4)-{beta-D-GlcNAc-(1-&gt;2)-[beta-D-GlcNAc-(1-&gt;4)]-alpha-D-Man-(1-&gt;3)-[beta-D-GlcNAc-(1-&gt;2)-[beta-D-GlcNAc-(1-&gt;6)]-alpha-D-Man-(1-&gt;6)]-beta-D-Man-(1-&gt;4)-beta-D-GlcNAc-(1-&gt;4)-beta-D-GlcNAc}-L-asparaginyl-[protein] + UDP + H(+). The enzyme catalyses 3-O-[N-acetyl-beta-D-glucosaminyl-(1-&gt;2)-alpha-D-mannosyl]-L-seryl-[protein] + UDP-N-acetyl-alpha-D-glucosamine = O(3)-{N-acetyl-beta-D-glucosaminyl-(1-&gt;2)-[N-acetyl-beta-D-glucosaminyl-(1-&gt;6)]-alpha-D-mannosyl}-L-seryl-[protein] + UDP + H(+). It carries out the reaction 3-O-[N-acetyl-beta-D-glucosaminyl-(1-&gt;2)-alpha-D-mannosyl]-L-threonyl-[protein] + UDP-N-acetyl-alpha-D-glucosamine = O(3)-{N-acetyl-beta-D-glucosaminyl-(1-&gt;2)-[N-acetyl-beta-D-glucosaminyl-(1-&gt;6)]-alpha-D-mannosyl}-L-threonyl-[protein] + UDP + H(+). It functions in the pathway protein modification; protein glycosylation. In terms of biological role, glycosyltransferase that acts on alpha-linked mannose of N-glycans and O-mannosyl glycans. Catalyzes the transfer of N-acetylglucosamine (GlcNAc) to the beta 1-6 linkage of the mannose residue of GlcNAc-beta1,2-Man-alpha on both the alpha1,3- and alpha1,6-linked mannose arms in the core structure of N-glycan. Also acts on the GlcNAc-beta1,2-Man-alpha1-Ser/Thr moiety, forming a 2,6-branched structure in brain O-mannosyl glycan. Plays an active role in modulating integrin and laminin-dependent adhesion and migration of neuronal cells via its activity in the O-mannosyl glycan pathway. In Homo sapiens (Human), this protein is Alpha-1,6-mannosylglycoprotein 6-beta-N-acetylglucosaminyltransferase B (MGAT5B).